Here is a 260-residue protein sequence, read N- to C-terminus: MADWQKAHGRLQRDVAGNRTVPYAGADAMTRPRQAQSPLSAADKAAALALTPVSRETEARLDAYVDLLVQWQTKTNLIASSTLPQLWTRHIADSLQLLALAPQAKRWADFGSGGGFPGVVLACALADVEGARIDLVERNAKKAAFLREAVRITGTPGVIHPMDIGDYVDRLDGRIDCVTARALAPLQVLLGFAEPLVKQGAKALLLKGQDVEAELTEATKYWNIEPRLHSSRTGGQGWIVELDRIERRDRPPTKQAWRRA.

Positions 111, 116, and 181 each coordinate S-adenosyl-L-methionine.

This sequence belongs to the methyltransferase superfamily. RNA methyltransferase RsmG family.

It is found in the cytoplasm. It carries out the reaction guanosine(527) in 16S rRNA + S-adenosyl-L-methionine = N(7)-methylguanosine(527) in 16S rRNA + S-adenosyl-L-homocysteine. In terms of biological role, specifically methylates the N7 position of guanine in position 527 of 16S rRNA. The polypeptide is Ribosomal RNA small subunit methyltransferase G (Nitrobacter hamburgensis (strain DSM 10229 / NCIMB 13809 / X14)).